The primary structure comprises 101 residues: UPF0125 protein VC_0850 (101 aa).

This sequence belongs to the UPF0125 (RnfH) family.

The protein is UPF0125 protein VC_0850 of Vibrio cholerae serotype O1 (strain ATCC 39315 / El Tor Inaba N16961).